The sequence spans 115 residues: U3-lycotoxin-Ls1a (115 aa).

A signal peptide spans 1 to 20 (MKFVLLFGVFLVTLFSYSSA). A propeptide spanning residues 21 to 44 (EMLDDFDQADEDELLSLIEKEEAR) is cleaved from the precursor. 4 disulfides stabilise this stretch: Cys48–Cys63, Cys55–Cys72, Cys62–Cys87, and Cys74–Cys85.

This sequence belongs to the neurotoxin 19 (CSTX) family. 01 subfamily. As to expression, expressed by the venom gland.

The protein localises to the secreted. In Lycosa singoriensis (Wolf spider), this protein is U3-lycotoxin-Ls1a.